Consider the following 101-residue polypeptide: Urease subunit beta (101 aa).

It belongs to the urease beta subunit family. As to quaternary structure, heterotrimer of UreA (gamma), UreB (beta) and UreC (alpha) subunits. Three heterotrimers associate to form the active enzyme.

The protein resides in the cytoplasm. It catalyses the reaction urea + 2 H2O + H(+) = hydrogencarbonate + 2 NH4(+). It participates in nitrogen metabolism; urea degradation; CO(2) and NH(3) from urea (urease route): step 1/1. This is Urease subunit beta from Ralstonia pickettii (strain 12J).